The following is a 125-amino-acid chain: MNAKRPVNLDLTKFHFPPMAILSIGHRISGFVLFLCMPLMFYLLHRATASAESFYHLHQLLLHNGWIKLAVWIMLSATLFHLFAGIRHLAMDLGFWESVPEGRISAYTVFVVSFIAIVLAGVWIW.

At 1–22 the chain is on the cytoplasmic side; sequence MNAKRPVNLDLTKFHFPPMAIL. Residues 23–48 traverse the membrane as a helical segment; it reads SIGHRISGFVLFLCMPLMFYLLHRAT. At 49-65 the chain is on the periplasmic side; that stretch reads ASAESFYHLHQLLLHNG. The chain crosses the membrane as a helical span at residues 66-86; that stretch reads WIKLAVWIMLSATLFHLFAGI. H81 is a binding site for heme. The Cytoplasmic segment spans residues 87–104; that stretch reads RHLAMDLGFWESVPEGRI. A helical transmembrane segment spans residues 105-125; that stretch reads SAYTVFVVSFIAIVLAGVWIW.

This sequence belongs to the cytochrome b560 family. As to quaternary structure, part of an enzyme complex containing four subunits: a flavoprotein, an iron-sulfur protein, plus two membrane-anchoring proteins, SdhC and SdhD. The complex can form homotrimers. The cofactor is heme.

The protein localises to the cell inner membrane. It participates in carbohydrate metabolism; tricarboxylic acid cycle. In terms of biological role, membrane-anchoring subunit of succinate dehydrogenase (SDH). This Coxiella burnetii (strain RSA 493 / Nine Mile phase I) protein is Succinate dehydrogenase cytochrome b556 subunit (sdhC).